The sequence spans 260 residues: Isopentenyl phosphate kinase (260 aa).

Residue 6 to 10 (KLGGS) coordinates ATP. Gly-55 provides a ligand contact to substrate. Gly-56 provides a ligand contact to ATP. 2 residues coordinate substrate: His-60 and Gly-159. 3 residues coordinate ATP: Asp-180, Gly-217, and Lys-221.

It belongs to the isopentenyl phosphate kinase family. In terms of assembly, homodimer.

It carries out the reaction isopentenyl phosphate + ATP = isopentenyl diphosphate + ADP. Catalyzes the formation of isopentenyl diphosphate (IPP), the building block of all isoprenoids. Has no activity with farnesyl phosphate. This chain is Isopentenyl phosphate kinase, found in Methanocaldococcus jannaschii (strain ATCC 43067 / DSM 2661 / JAL-1 / JCM 10045 / NBRC 100440) (Methanococcus jannaschii).